The following is a 408-amino-acid chain: Acetate kinase (408 aa).

Residue asparagine 7 coordinates Mg(2+). ATP is bound at residue lysine 14. Substrate is bound at residue arginine 91. Residue aspartate 148 is the Proton donor/acceptor of the active site. ATP is bound by residues 208-212, 283-285, and 331-335; these read HLGNG, DFR, and GIGEN. Glutamate 384 serves as a coordination point for Mg(2+).

Belongs to the acetokinase family. In terms of assembly, homodimer. Mg(2+) serves as cofactor. It depends on Mn(2+) as a cofactor.

It localises to the cytoplasm. The catalysed reaction is acetate + ATP = acetyl phosphate + ADP. It functions in the pathway metabolic intermediate biosynthesis; acetyl-CoA biosynthesis; acetyl-CoA from acetate: step 1/2. With respect to regulation, inhibited by diethylpyrocarbonate, hydroxylamine and phenylglyoxal. Catalyzes the formation of acetyl phosphate from acetate and ATP. Can also catalyze the reverse reaction. Can also phosphorylate propionate, but has very low activity toward butyrate. This chain is Acetate kinase, found in Methanosarcina thermophila.